A 351-amino-acid polypeptide reads, in one-letter code: Probable V-type proton ATPase subunit d (351 aa).

The protein belongs to the V-ATPase V0D/AC39 subunit family. As to quaternary structure, V-ATPase is a heteromultimeric enzyme composed of a peripheral catalytic V1 complex (components A to H) attached to an integral membrane V0 proton pore complex (components: a, c, c', c'' and d).

Its function is as follows. Subunit of the integral membrane V0 complex of vacuolar ATPase. Vacuolar ATPase is responsible for acidifying a variety of intracellular compartments in eukaryotic cells, thus providing most of the energy required for transport processes in the vacuolar system. The polypeptide is Probable V-type proton ATPase subunit d (Oryza sativa subsp. japonica (Rice)).